Reading from the N-terminus, the 155-residue chain is 6,7-dimethyl-8-ribityllumazine synthase (155 aa).

Residues phenylalanine 22, 56 to 58, and 80 to 82 contribute to the 5-amino-6-(D-ribitylamino)uracil site; these read AFE and AVI. 85–86 contacts (2S)-2-hydroxy-3-oxobutyl phosphate; sequence ST. Histidine 88 functions as the Proton donor in the catalytic mechanism. Phenylalanine 113 contributes to the 5-amino-6-(D-ribitylamino)uracil binding site. (2S)-2-hydroxy-3-oxobutyl phosphate is bound at residue arginine 127.

It belongs to the DMRL synthase family.

It catalyses the reaction (2S)-2-hydroxy-3-oxobutyl phosphate + 5-amino-6-(D-ribitylamino)uracil = 6,7-dimethyl-8-(1-D-ribityl)lumazine + phosphate + 2 H2O + H(+). It functions in the pathway cofactor biosynthesis; riboflavin biosynthesis; riboflavin from 2-hydroxy-3-oxobutyl phosphate and 5-amino-6-(D-ribitylamino)uracil: step 1/2. Functionally, catalyzes the formation of 6,7-dimethyl-8-ribityllumazine by condensation of 5-amino-6-(D-ribitylamino)uracil with 3,4-dihydroxy-2-butanone 4-phosphate. This is the penultimate step in the biosynthesis of riboflavin. The polypeptide is 6,7-dimethyl-8-ribityllumazine synthase (Bifidobacterium longum subsp. infantis (strain ATCC 15697 / DSM 20088 / JCM 1222 / NCTC 11817 / S12)).